Here is a 397-residue protein sequence, read N- to C-terminus: Elongation factor Tu 2 (397 aa).

Positions 10 to 206 constitute a tr-type G domain; it reads KPHVNIGTIG…AIDTWIPEPV (197 aa). The segment at 19–26 is G1; the sequence is GHVDHGKT. 19–26 is a binding site for GTP; it reads GHVDHGKT. Residue Thr26 participates in Mg(2+) binding. Residues 61 to 65 are G2; that stretch reads GITIS. Residues 82–85 are G3; that stretch reads DCPG. GTP-binding positions include 82 to 86 and 137 to 140; these read DCPGH and NKCD. The segment at 137–140 is G4; that stretch reads NKCD. Residues 175–177 form a G5 region; the sequence is SAL.

It belongs to the TRAFAC class translation factor GTPase superfamily. Classic translation factor GTPase family. EF-Tu/EF-1A subfamily. Monomer.

The protein localises to the cytoplasm. It catalyses the reaction GTP + H2O = GDP + phosphate + H(+). Functionally, GTP hydrolase that promotes the GTP-dependent binding of aminoacyl-tRNA to the A-site of ribosomes during protein biosynthesis. This is Elongation factor Tu 2 from Alkaliphilus metalliredigens (strain QYMF).